The primary structure comprises 216 residues: Pentapeptide repeat protein VPA0095 (216 aa).

The protein belongs to the pentapeptide repeat protein family.

Functionally, has no effect when overexpressed in E.coli. When Cys-115 is mutated to Tyr and overexpressed it increases (fluoro)quinolone resistance in E.coli up to 16-fold for ciprofloxacin, levofloxacin and nalidixic acid. This chain is Pentapeptide repeat protein VPA0095, found in Vibrio parahaemolyticus serotype O3:K6 (strain RIMD 2210633).